The sequence spans 487 residues: MKALDELTFDNRFARLGDAFSAHVLPEPIDNPRLVVASPAALALLDLDPAMADTQEFAELFGGHKLWADAEPRAMVYSGHQFGGYTPQLGDGRGLLLGEVYNAAGEHWDLHLKGAGQTPFSRMGDGRAVLRSSIREFLASEALHALNIPSSRAACVIGSDTPVWREKQERAAMVLRLAPSHIRFGHFEYFYYTKRPEQQKLLGEHVLAMHYPECLEQPEPYLAMFREIVERNAELIAKWQAYGFCHGVMNTDNMSILGITFDFGPFAFLDDFDANFICNHSDDQGRYSFSNQVPVGQWNLSTLAQALTPLISVEALRETLGLYLPLFQAHYLDLMRRRLGFTTAEDDDQMLLEQLLQLMQNSGVDYTLFFRRLGEESAEQAVARLRDDFVDIKGFDAWGERYVARVARDGATDQEQRRARMHAVNPLYILRNYLAQKAIDAAEQGDYSEVRRLHAVLSNPFEEQPGMESYAERPPEWGKHLEISCSS.

ATP-binding residues include Gly90, Gly92, Arg93, Lys113, Asp125, Gly126, Arg176, and Arg183. The active-site Proton acceptor is Asp252. Residues Asn253 and Asp262 each coordinate Mg(2+). Asp262 serves as a coordination point for ATP.

Belongs to the SELO family. It depends on Mg(2+) as a cofactor. The cofactor is Mn(2+).

It catalyses the reaction L-seryl-[protein] + ATP = 3-O-(5'-adenylyl)-L-seryl-[protein] + diphosphate. The catalysed reaction is L-threonyl-[protein] + ATP = 3-O-(5'-adenylyl)-L-threonyl-[protein] + diphosphate. It carries out the reaction L-tyrosyl-[protein] + ATP = O-(5'-adenylyl)-L-tyrosyl-[protein] + diphosphate. The enzyme catalyses L-histidyl-[protein] + UTP = N(tele)-(5'-uridylyl)-L-histidyl-[protein] + diphosphate. It catalyses the reaction L-seryl-[protein] + UTP = O-(5'-uridylyl)-L-seryl-[protein] + diphosphate. The catalysed reaction is L-tyrosyl-[protein] + UTP = O-(5'-uridylyl)-L-tyrosyl-[protein] + diphosphate. Its function is as follows. Nucleotidyltransferase involved in the post-translational modification of proteins. It can catalyze the addition of adenosine monophosphate (AMP) or uridine monophosphate (UMP) to a protein, resulting in modifications known as AMPylation and UMPylation. The protein is Protein nucleotidyltransferase YdiU of Pseudomonas fluorescens (strain Pf0-1).